The following is a 242-amino-acid chain: Probable transcriptional regulatory protein mhp472 (242 aa).

Belongs to the TACO1 family.

The protein resides in the cytoplasm. In Mesomycoplasma hyopneumoniae (strain 232) (Mycoplasma hyopneumoniae), this protein is Probable transcriptional regulatory protein mhp472.